Consider the following 359-residue polypeptide: Alpha-ketoglutarate-dependent dioxygenase cnsM (359 aa).

Substrate is bound at residue His-120. Fe cation is bound by residues His-158 and Asp-160. A 2-oxoglutarate-binding site is contributed by Thr-186. His-311 lines the Fe cation pocket. 2-oxoglutarate contacts are provided by Arg-323 and Arg-327. Arg-327 contributes to the substrate binding site.

The protein belongs to the TfdA dioxygenase family. The cofactor is Fe(2+).

Its pathway is alkaloid biosynthesis. Alpha-ketoglutarate-dependent dioxygenase; part of the gene cluster that mediates the biosynthesis of communesins, a prominent class of indole alkaloids with great potential as pharmaceuticals. Communesins are biosynthesized by the coupling of tryptamine and aurantioclavine, two building blocks derived from L-tryptophan. The L-tryptophan decarboxylase cnsB converts L-tryptophan to tryptamine, whereas the tryptophan dimethylallyltransferase cnsF converts L-tryptophan to 4-dimethylallyl tryptophan which is further transformed to aurantioclavine by the aurantioclavine synthase cnsA, probably aided by the catalase cnsD. The cytochrome P450 monooxygenase cnsC catalyzes the heterodimeric coupling between the two different indole moieties, tryptamine and aurantioclavine, to construct vicinal quaternary stereocenters and yield the heptacyclic communesin scaffold. The O-methyltransferase cnsE then methylates the communesin scaffold to produce communesin K, the simplest characterized communesin that contains the heptacyclic core. The dioxygenase cnsJ converts communesin K into communesin I. Acylation to introduce the hexadienyl group at position N16 of communesin I by the acyltransferase cnsK leads to the production of communesin B. The hexadienyl group is produced by the highly reducing polyketide synthase cnsI, before being hydrolytically removed from cnsI by the serine hydrolase cnsH, converted into hexadienyl-CoA by the CoA ligase cnsG, and then transferred to communesin I by cnsK. Surprisingly, cnsK may also be a promiscuous acyltransferase that can tolerate a range of acyl groups, including acetyl-, propionyl-, and butyryl-CoA, which lead to communesins A, G and H respectively. The roles of the alpha-ketoglutarate-dependent dioxygenases cnsM and cnsP have still to be determined. This is Alpha-ketoglutarate-dependent dioxygenase cnsM from Penicillium expansum (Blue mold rot fungus).